The chain runs to 907 residues: Lateral signaling target protein 2 homolog (907 aa).

Disordered regions lie at residues 339 to 395, 463 to 604, 662 to 688, 716 to 756, and 770 to 834; these read SSDN…DPAN, LTDS…SGDA, NSSP…PDPA, EVNA…SENG, and GSGG…EERR. Residues 351–361 show a composition bias toward polar residues; that stretch reads DISSFYTSNNR. Positions 367 to 393 are enriched in acidic residues; it reads EPNEDDDVSESNDEDEDEGEEVDEDDP. Composition is skewed to polar residues over residues 463–475 and 486–495; these read LTDS…NPSL and PVTSSHPIAQ. A compositionally biased stretch (acidic residues) spans 501 to 516; sequence SEEEGEVDEYDEDDSE. Residues 525 to 549 are compositionally biased toward basic residues; it reads HHTKHQRRHRHHHHHHRKHYSKHRS. A compositionally biased stretch (low complexity) spans 550-565; it reads SAAGSAGTSGTTCSAA. Positions 568–580 are enriched in polar residues; it reads QISSCDTSPSSGG. Positions 592 to 602 are enriched in gly residues; sequence GSSGNSSGGSG. The segment covering 742 to 751 has biased composition (polar residues); the sequence is APRTMMTTAA. The span at 777–793 shows a compositional bias: low complexity; sequence GSSRSSQERSVSLSETS. The span at 816–826 shows a compositional bias: polar residues; that stretch reads PKSVQSEQSGQ. The FYVE-type zinc-finger motif lies at 845–905; sequence DGDAPRCMAC…VCRECFVREV (61 aa). Zn(2+)-binding residues include Cys851, Cys854, Cys867, Cys870, Cys875, Cys878, Cys897, and Cys900.

It belongs to the lst-2 family.

Its function is as follows. Negative regulator of epidermal growth factor receptor (EGFR) signaling. In Culex quinquefasciatus (Southern house mosquito), this protein is Lateral signaling target protein 2 homolog.